A 156-amino-acid chain; its full sequence is ATP synthase subunit b (156 aa).

The chain crosses the membrane as a helical span at residues 3-23 (ITLTIFAQALAFAGLIWIVAT).

This sequence belongs to the ATPase B chain family. In terms of assembly, F-type ATPases have 2 components, F(1) - the catalytic core - and F(0) - the membrane proton channel. F(1) has five subunits: alpha(3), beta(3), gamma(1), delta(1), epsilon(1). F(0) has three main subunits: a(1), b(2) and c(10-14). The alpha and beta chains form an alternating ring which encloses part of the gamma chain. F(1) is attached to F(0) by a central stalk formed by the gamma and epsilon chains, while a peripheral stalk is formed by the delta and b chains.

It is found in the cell inner membrane. Functionally, f(1)F(0) ATP synthase produces ATP from ADP in the presence of a proton or sodium gradient. F-type ATPases consist of two structural domains, F(1) containing the extramembraneous catalytic core and F(0) containing the membrane proton channel, linked together by a central stalk and a peripheral stalk. During catalysis, ATP synthesis in the catalytic domain of F(1) is coupled via a rotary mechanism of the central stalk subunits to proton translocation. Its function is as follows. Component of the F(0) channel, it forms part of the peripheral stalk, linking F(1) to F(0). In Xanthomonas campestris pv. campestris (strain 8004), this protein is ATP synthase subunit b.